A 291-amino-acid chain; its full sequence is Transcription factor TYE7 (291 aa).

The interval 89–109 (FPTDQFFSNPSSYSHSPEVSS) is disordered. The span at 96–109 (SNPSSYSHSPEVSS) shows a compositional bias: low complexity. Phosphoserine is present on S104. In terms of domain architecture, bHLH spans 180–265 (FQKQAHNKIE…EKAVDYILYL (86 aa)). DNA-binding residues include H185, E189, and R193. The disordered stretch occupies residues 221 to 245 (DSVKKQDEDGAETAATTPLPSAAAT). Residues 233 to 245 (TAATTPLPSAAAT) are compositionally biased toward low complexity. T237 carries the post-translational modification Phosphothreonine.

As to quaternary structure, homodimer. Efficient DNA binding requires dimerization with another bHLH protein.

The protein localises to the nucleus. Functionally, transcriptional activator of glycolytic gene expression, such as enolase genes (ENO1 and ENO2), glyceraldehyde-3-phosphate dehydrogenase gene (TDH), phosphoglycerate kinase (PGK1), phosphoglycerate mutase (PGM1), pyruvate kinase (PYK1) and triosephosphate isomerase (TPI1) genes. Binds DNA on E-box motifs: 5'-CANNTG-3'. In response to adenylic nucleotide reduction, activates Ty1 mRNA transcription, possibly by controlling Ty1 antisense transcription. Acts as a cell cycle transcription factor. Its function may also be linked to sulfur metabolism and the cross-regulation between phosphate and sulfate metabolism. The protein is Transcription factor TYE7 of Saccharomyces cerevisiae (strain ATCC 204508 / S288c) (Baker's yeast).